We begin with the raw amino-acid sequence, 1078 residues long: Disheveled-associated activator of morphogenesis 1 (1078 aa).

The residue at position 34 (Ser34) is a Phosphoserine. Positions 45–420 constitute a GBD/FH3 domain; that stretch reads LPMPPVEELD…QIVIQNDKGQ (376 aa). A coiled-coil region spans residues 437-526; sequence RMLVNENEVK…ELSRRAVCAS (90 aa). 2 disordered regions span residues 456–480 and 524–585; these read RKEH…TQEK and CASI…PLGA. Residues 528–599 form the FH1 domain; the sequence is PGGPSPGAPG…PGAPMGLALK (72 aa). Composition is skewed to pro residues over residues 530-539 and 548-585; these read GPSPGAPGGP and LLPP…PLGA. Residues 600–1009 form the FH2 domain; that stretch reads KKSIPQPTNA…EERRARMEAQ (410 aa). An actin-binding region spans residues 693-702; that stretch reads AQNCNILLSR. Basic and acidic residues predominate over residues 987 to 1027; that stretch reads KQENENMRKKKEEEERRARMEAQLKEQRERERKMRKAKENS. Disordered regions lie at residues 987 to 1034 and 1055 to 1078; these read KQEN…GEFD and RNRK…KLNF. Ser1027 and Ser1030 each carry phosphoserine. Residues 1027-1058 form the DAD domain; it reads SEESGEFDDLVSALRSGEVFDKDLSKLKRNRK. Residues 1067–1078 show a composition bias toward basic and acidic residues; it reads SSRERPITKLNF.

Belongs to the formin homology family. Homodimer. Interacts with CIP4, FNBP1 and FNBP1L. Interacts with the SH3 domains of Abl, BTK, endophilin, spectrin and SRC. Binds specifically to GTP-bound CDC42 and RHOA. Interacts with INTU; INTU mediates the indirect interaction between DAAM1 and NPHP4. Interacts (via coiled coil domain) with KANK1 (via coiled coil domain). As to expression, expressed in all tissues examined.

The protein localises to the cytoplasm. The protein resides in the cytoskeleton. It is found in the cilium basal body. Binds to disheveled (Dvl) and Rho, and mediates Wnt-induced Dvl-Rho complex formation. May play a role as a scaffolding protein to recruit Rho-GDP and Rho-GEF, thereby enhancing Rho-GTP formation. Can direct nucleation and elongation of new actin filaments. Involved in building functional cilia. Involved in the organization of the subapical actin network in multiciliated epithelial cells. Together with DAAM2, required for myocardial maturation and sarcomere assembly. During cell division, may regulate RHOA activation that signals spindle orientation and chromosomal segregation. The sequence is that of Disheveled-associated activator of morphogenesis 1 (DAAM1) from Homo sapiens (Human).